A 614-amino-acid polypeptide reads, in one-letter code: DBH-like monooxygenase protein 1 (614 aa).

A signal peptide spans 1–22 (MRPLRPWALLLGALLGAAAAAA). Over 23–592 (RRYPHVAVLD…SSSCLPCSLS (570 aa)) the chain is Lumenal. The 114-residue stretch at 35–148 (AAYRLLWGRR…STVRVIWAYH (114 aa)) folds into the DOMON domain. A glycan (N-linked (GlcNAc...) asparagine) is linked at N114. Y203 is an active-site residue. Cystine bridges form between C205–C257 and C242–C269. Residues H235 and H236 each contribute to the Cu cation site. N247 carries an N-linked (GlcNAc...) asparagine glycan. Residues H307, H389, H391, and M464 each contribute to the Cu cation site. 3 cysteine pairs are disulfide-bonded: C364–C480, C368–C550, and C443–C465. Residue H389 is part of the active site. 2 N-linked (GlcNAc...) asparagine glycosylation sites follow: N476 and N517. Residues 593–613 (LTLLFVVYVASSTIGNFGPVV) traverse the membrane as a helical segment.

This sequence belongs to the copper type II ascorbate-dependent monooxygenase family. It depends on Cu(2+) as a cofactor.

Its subcellular location is the endoplasmic reticulum membrane. The polypeptide is DBH-like monooxygenase protein 1 (MOXD1) (Gallus gallus (Chicken)).